Consider the following 100-residue polypeptide: ATP synthase subunit c (100 aa).

2 consecutive transmembrane segments (helical) span residues 26 to 46 and 71 to 91; these read FSVV…AIGM and MFIA…IALI.

The protein belongs to the ATPase C chain family. As to quaternary structure, F-type ATPases have 2 components, F(1) - the catalytic core - and F(0) - the membrane proton channel. F(1) has five subunits: alpha(3), beta(3), gamma(1), delta(1), epsilon(1). F(0) has three main subunits: a(1), b(2) and c(10-14). The alpha and beta chains form an alternating ring which encloses part of the gamma chain. F(1) is attached to F(0) by a central stalk formed by the gamma and epsilon chains, while a peripheral stalk is formed by the delta and b chains.

The protein resides in the cell inner membrane. In terms of biological role, f(1)F(0) ATP synthase produces ATP from ADP in the presence of a proton or sodium gradient. F-type ATPases consist of two structural domains, F(1) containing the extramembraneous catalytic core and F(0) containing the membrane proton channel, linked together by a central stalk and a peripheral stalk. During catalysis, ATP synthesis in the catalytic domain of F(1) is coupled via a rotary mechanism of the central stalk subunits to proton translocation. Functionally, key component of the F(0) channel; it plays a direct role in translocation across the membrane. A homomeric c-ring of between 10-14 subunits forms the central stalk rotor element with the F(1) delta and epsilon subunits. The sequence is that of ATP synthase subunit c from Campylobacter fetus subsp. fetus (strain 82-40).